A 397-amino-acid polypeptide reads, in one-letter code: LIM/homeobox protein Lhx3 (397 aa).

2 LIM zinc-binding domains span residues 31-81 and 90-144; these read CAGC…CKDD and CAAC…CKAD. Thr-63 carries the post-translational modification Phosphothreonine. The residue at position 71 (Ser-71) is a Phosphoserine. The homeobox DNA-binding region spans 157–216; that stretch reads AKRPRTTITAKQLETLKSAYNTSPKPARHVREQLSSETGLDMRVVQVWFQNRRAKEKRLK. The disordered stretch occupies residues 212-397; it reads EKRLKKDAGR…WLDEVDHAQF (186 aa). Tyr-227 carries the phosphotyrosine modification. Phosphoserine is present on residues Ser-234 and Ser-238. The segment covering 316–331 has biased composition (pro residues); that stretch reads GVPPSPAAPQSLPGPQ.

In terms of assembly, interacts with POU1F1. At neuronal promoters, interacts with LDB1, in motor neurons LDB1 is displaced by ISL1 and a ternary complex is formed in which ISL1 contacts both LHX3 and LDB1; allosteric structural changes in the DNA binding domain of LHX3, induced by the ISL1-LHX3 interaction, may explain differences in sequence specificity of the different complexes. Interacts with LDB2. May interact with CITED2/MRG1.

The protein resides in the nucleus. Functionally, transcription factor. Recognizes and binds to the consensus sequence motif 5'-AATTAATTA-3' in the regulatory elements of target genes, such as glycoprotein hormones alpha chain CGA and visual system homeobox CHX10, positively modulating transcription; transcription can be co-activated by LDB2. Synergistically enhances transcription from the prolactin promoter in cooperation with POU1F1/Pit-1. Required for the establishment of the specialized cells of the pituitary gland and the nervous system. Involved in the development of interneurons and motor neurons in cooperation with LDB1 and ISL1. The sequence is that of LIM/homeobox protein Lhx3 (LHX3) from Homo sapiens (Human).